Here is a 947-residue protein sequence, read N- to C-terminus: MLDKLLRLGEGRMVKRLKKVADYVNTLSDDVEKLSDAELRAKTDEFRKRIDGGEDLDDLLPEAFAVAREAAWRVLSQRHFDVQVMGGAALHFGNVAEMKTGEGKTLTCVLPAYLNALSGKGVHVVTVNDYLAKRDAEWMGRVHRFLGLDVGVILSGLTPDERRAAYHADITYGTNNEFGFDYLRDNMAHRLEDRVQRGHNFAVVDEVDSILIDEARTPLIISGPADAASNWYSEFARLAPLMEKDVHYEVDLRKRTVGVHEVGVEFVEDQLGIENLYEAANSPLVSYLNNALKAKELFQRDKDYIVRNGEVLIVDEFTGRVLLGRRYNEGMHQAIEAKEHVEIKAENQTLATITLQNYFRLYDKLAGMTGTAQTEAAELHEIYKLGVVPIPTNRDMIRQDQTDLIYKTEEAKFIAVVDDVYERYEKGQPVLIGTTSVERSEYLSKQFTKRKIPHNVLNAKYHEQEANIIAEAGRLGAITVATNMAGRGTDIVLGGNVDFLADKRLREQGLDPIETPEEYEAAWESTLNQIKAEAEEEADDVRAVGGLYVLGTERHESRRIDNQLRGRSGRQGDPGESRFYLSLGDELMRRFNGATLEALLTRLNLPDDVPIEAKMVTRAIKSAQTQVEQQNFEVRKNVLKYDEVMNQQRKVIYEERRRILEGEDLAEQAHKMLVDVVTAYVNGATAEGYAEDWDLEQLWTALKQLYPVGIDYHDLVDSDAVGEAGELTREELLDMLIKDAERAYAERERELEELAGEGAMRQLERNVLLNVIDRKWREHLYEMDYLKEGIGLRAMAQRDPLVEYQREGYDMFVGMLEALKEESVGFLFNVTVEAAPPAPSNRVAPVAAPPGLSEFAAAAAKAQEQTGQGAVATKERETPAPTLRAKGIDNDDTPPLTYVGPGEDGTAEVQRSNGGPRHAAPGGATRRERREAARKQAKTSKPTRRRG.

Residues Gln-83, 101-105 (GEGKT), and Asp-490 contribute to the ATP site. The segment at 860–947 (AKAQEQTGQG…KTSKPTRRRG (88 aa)) is disordered. Residues 925-934 (TRRERREAAR) show a composition bias toward basic and acidic residues. Residues 935 to 947 (KQAKTSKPTRRRG) show a composition bias toward basic residues.

It belongs to the SecA family. As to quaternary structure, monomer and homodimer. Part of the essential Sec protein translocation apparatus which comprises SecA, SecYEG and auxiliary proteins SecDF. Other proteins may also be involved.

The protein localises to the cell membrane. It localises to the cytoplasm. The enzyme catalyses ATP + H2O + cellular proteinSide 1 = ADP + phosphate + cellular proteinSide 2.. Functionally, part of the Sec protein translocase complex. Interacts with the SecYEG preprotein conducting channel. Has a central role in coupling the hydrolysis of ATP to the transfer of proteins into and across the cell membrane, serving as an ATP-driven molecular motor driving the stepwise translocation of polypeptide chains across the membrane. The polypeptide is Protein translocase subunit SecA 1 (Mycobacterium sp. (strain JLS)).